Here is a 362-residue protein sequence, read N- to C-terminus: uncharacterized protein (362 aa).

A helical transmembrane segment spans residues 13 to 33 (VLILSVGLNMLFLLLFYSAIF). In terms of domain architecture, LysM spans 314 to 357 (EEYVVQDGDSLWLIAKRFGIPMDKIIQKNGLNHHRLFPGKVLKL).

The protein belongs to the chlamydial CPn_0593/CT_474/TC_0759 family.

It is found in the membrane. This is an uncharacterized protein from Chlamydia pneumoniae (Chlamydophila pneumoniae).